A 542-amino-acid polypeptide reads, in one-letter code: Protein lin-9 homolog (542 aa).

An N-acetylalanine modification is found at Ala2. A sufficient for interaction with RB1 region spans residues 2 to 296 (AELDQLPDES…QKQRPSRFFM (295 aa)). A Glycyl lysine isopeptide (Lys-Gly) (interchain with G-Cter in SUMO2) cross-link involves residue Lys21. A phosphoserine mark is found at Ser65 and Ser95. Thr96 and Thr304 each carry phosphothreonine. 2 positions are modified to phosphoserine: Ser309 and Ser321. Residues 354 to 413 (MIKKEHIKKLREMNTEAEKLKSYSMPISIEFQRRYATIVLELEQLNKDLNKVLHKVQQYC) adopt a coiled-coil conformation.

It belongs to the lin-9 family. Component of the DREAM complex (also named LINC complex) at least composed of E2F4, E2F5, LIN9, LIN37, LIN52, LIN54, MYBL1, MYBL2, RBL1, RBL2, RBBP4, TFDP1 and TFDP2. The complex exists in quiescent cells where it represses cell cycle-dependent genes. It dissociates in S phase when LIN9, LIN37, LIN52 and LIN54 form a subcomplex that binds to MYBL2. Interacts with RB1. As to expression, expressed in thymus and testis.

It localises to the nucleus. Its subcellular location is the nucleoplasm. Its function is as follows. Acts as a tumor suppressor. Inhibits DNA synthesis. Its ability to inhibit oncogenic transformation is mediated through its association with RB1. Plays a role in the expression of genes required for the G1/S transition. The polypeptide is Protein lin-9 homolog (LIN9) (Homo sapiens (Human)).